A 754-amino-acid polypeptide reads, in one-letter code: MHALGHCCTVVTTRGPSHWLLLLDTHLGTLPGFKVSAGRGLPAAEVYFEAGPRVSLSRTDATIVAVYQSILFQLLGPTFPASWTEIGATMPHNEYTFPRFISNPPQFATLAFLPLLSPTSPLDLRALMVTAQLMCDAKRLSDEYTDYSTLSASLHGRMVATPEISWSLYVVLGIDSTQTSLSYFTRANESITYMRYYATAHNIHLRAADLPLVAAVRLDDLKDHQIPAPGSWDDLAPKLRFLPPELCLLLPDEFDLIRVQALQFLPEIAKHICDIQNTICALDKSFPDCGRIGGERYFAITAGLRLDQGRGRGLAGWRTPFGPFGVSHTDVFQRLELLGDAVLGFIVTARLLCLFPDASVGTLVELKMELVRNEALNYLVQTLGLPQLAEFSNNLVAKSKTWADMYEEIVGSIFTGPNGIYGCEEFLAKTLMSPEHSKTVGSACPDAVTKASKRVCMGEAGAHEFRSLVDYACEQGISVFCSSRVSTMFLERLRDIPAEDMLDWYRLGIQFSHRSGLSGPGGVVSVIDIMTHLARGLWLGSPGFYVEQQTDKNESACPPTIPVLYIYHRSVQCPVLYGSLTETPTGPVASKVLALYEKILAYESSGGSKHIAAQTVSRSLAVPIPSGTIPFLIRLLQIALTPHVYQKLELLGDAFLKCSLALHLHALHPTLTEGALTRMRQSAETNSVLGRLTKRFPSVVSEVIIESHPKIQPDSKVYGDTFEAILAAILLACGEEAAGAFVREHVLPQVVADA.

The PAZ domain maps to 132–251 (QLMCDAKRLS…LPPELCLLLP (120 aa)). RNase III domains are found at residues 298 to 418 (FAIT…TGPN) and 613 to 734 (AQTV…LACG). Positions 336, 404, 407, 649, 720, and 723 each coordinate Mn(2+).

Homodimer. It depends on Mg(2+) as a cofactor. The cofactor is Mn(2+).

Functionally, involved in cleaving double-stranded RNA in the RNA interference (RNAi) pathway. It produces 21 to 23 bp dsRNAs (siRNAs) which target the selective destruction of homologous RNAs. This Giardia intestinalis (strain ATCC 50803 / WB clone C6) (Giardia lamblia) protein is Endoribonuclease Dicer-like.